We begin with the raw amino-acid sequence, 313 residues long: Deoxyribonucleoside regulator (313 aa).

The H-T-H motif DNA-binding region spans 23–42; it reads QQQIAEQLNISRPTVSRLLQ.

The protein belongs to the SorC transcriptional regulatory family. As to quaternary structure, homooctamer.

In terms of biological role, negative regulator of the dra-nupC-pdp operon. DeoR binds cooperatively to the operator DNA, which consists of a palindrome and a direct repeat sequence located 3' to the palindrome. This chain is Deoxyribonucleoside regulator, found in Bacillus subtilis (strain 168).